The chain runs to 320 residues: Short-chain dehydrogenase/reductase ATR7 (320 aa).

9 residues coordinate NADP(+): serine 32, isoleucine 34, glutamine 55, aspartate 70, asparagine 93, lysine 134, tyrosine 167, lysine 171, and threonine 202. Tyrosine 167 acts as the Proton acceptor in catalysis. The active-site Lowers pKa of active site Tyr is lysine 171.

The protein belongs to the short-chain dehydrogenases/reductases (SDR) family.

It participates in mycotoxin biosynthesis. Short-chain dehydrogenase/reductase; part of the core atranone cluster (CAC) which products are predicted to catalyze most or all steps of mycotoxin atranone synthesis, starting from geranylgeranyl pyrophosphate (GGPP). The initial cyclization of GGPP to dolabellane is probably performed by the terpene cyclase ATR13. The Baeyer-Villiger oxidation near the end of the atranone synthesis, which converts atranones D and E to atranones F and G is predicted to be catalyzed by the monooxygenase ATR8. Of the CAC's other predicted gene products, the reducing PKS ATR6 might synthesize a polyketide chain. This polyketide is probably transferred onto the atranone backbone by the polyketide transferase ATR5. Other predicted CAC products include 4 oxygenases (ATR2, ATR3, ATR4, and ATR14), 3 short-chain reductases (ATR7, ATR9, and ATR10), and a methyltransferase (ATR12). These may all be involved in the various steps of atranone biosynthesis, although their specific roles must await experimental determination. The protein is Short-chain dehydrogenase/reductase ATR7 of Stachybotrys chlorohalonatus (strain IBT 40285).